Here is a 66-residue protein sequence, read N- to C-terminus: uncharacterized protein (66 aa).

The N-terminal stretch at methionine 1–glycine 19 is a signal peptide.

This is an uncharacterized protein from Saccharomyces cerevisiae (strain ATCC 204508 / S288c) (Baker's yeast).